The sequence spans 384 residues: Acetylornithine aminotransferase (384 aa).

Pyridoxal 5'-phosphate is bound by residues glycine 94–threonine 95 and phenylalanine 121. Arginine 124 is a binding site for N(2)-acetyl-L-ornithine. Aspartate 206–glutamine 209 serves as a coordination point for pyridoxal 5'-phosphate. Lysine 235 is modified (N6-(pyridoxal phosphate)lysine). Serine 263 lines the N(2)-acetyl-L-ornithine pocket. A pyridoxal 5'-phosphate-binding site is contributed by threonine 264.

This sequence belongs to the class-III pyridoxal-phosphate-dependent aminotransferase family. ArgD subfamily. In terms of assembly, homodimer. The cofactor is pyridoxal 5'-phosphate.

It is found in the cytoplasm. It carries out the reaction N(2)-acetyl-L-ornithine + 2-oxoglutarate = N-acetyl-L-glutamate 5-semialdehyde + L-glutamate. Its pathway is amino-acid biosynthesis; L-arginine biosynthesis; N(2)-acetyl-L-ornithine from L-glutamate: step 4/4. In Listeria innocua serovar 6a (strain ATCC BAA-680 / CLIP 11262), this protein is Acetylornithine aminotransferase.